Here is a 218-residue protein sequence, read N- to C-terminus: Telomere repeats-binding bouquet formation protein 2 (218 aa).

Residues 117 to 143 (HDRMASSDKENIRPTPEHKQELSKSAE) are disordered.

Belongs to the TERB2 family. In terms of assembly, component of the MAJIN-TERB1-TERB2 complex, composed of MAJIN, TERB1 and TERB2. Specifically expressed in germline tissues.

It is found in the chromosome. The protein resides in the telomere. It localises to the nucleus inner membrane. Its function is as follows. Meiosis-specific telomere-associated protein involved in meiotic telomere attachment to the nucleus inner membrane, a crucial step for homologous pairing and synapsis. Component of the MAJIN-TERB1-TERB2 complex, which promotes telomere cap exchange by mediating attachment of telomeric DNA to the inner nuclear membrane and replacement of the protective cap of telomeric chromosomes: in early meiosis, the MAJIN-TERB1-TERB2 complex associates with telomeric DNA and the shelterin/telosome complex. During prophase, the complex matures and promotes release of the shelterin/telosome complex from telomeric DNA. The polypeptide is Telomere repeats-binding bouquet formation protein 2 (Mus musculus (Mouse)).